The following is a 151-amino-acid chain: 3-hydroxyacyl-[acyl-carrier-protein] dehydratase FabZ (151 aa).

Histidine 58 is a catalytic residue.

Belongs to the thioester dehydratase family. FabZ subfamily.

Its subcellular location is the cytoplasm. It carries out the reaction a (3R)-hydroxyacyl-[ACP] = a (2E)-enoyl-[ACP] + H2O. Involved in unsaturated fatty acids biosynthesis. Catalyzes the dehydration of short chain beta-hydroxyacyl-ACPs and long chain saturated and unsaturated beta-hydroxyacyl-ACPs. The protein is 3-hydroxyacyl-[acyl-carrier-protein] dehydratase FabZ of Histophilus somni (strain 129Pt) (Haemophilus somnus).